The chain runs to 311 residues: Methionyl-tRNA formyltransferase (311 aa).

Residue 110–113 (SLLP) participates in (6S)-5,6,7,8-tetrahydrofolate binding.

It belongs to the Fmt family.

It catalyses the reaction L-methionyl-tRNA(fMet) + (6R)-10-formyltetrahydrofolate = N-formyl-L-methionyl-tRNA(fMet) + (6S)-5,6,7,8-tetrahydrofolate + H(+). Functionally, attaches a formyl group to the free amino group of methionyl-tRNA(fMet). The formyl group appears to play a dual role in the initiator identity of N-formylmethionyl-tRNA by promoting its recognition by IF2 and preventing the misappropriation of this tRNA by the elongation apparatus. The sequence is that of Methionyl-tRNA formyltransferase from Streptococcus thermophilus (strain ATCC BAA-250 / LMG 18311).